We begin with the raw amino-acid sequence, 547 residues long: Intercellular adhesion molecule 3 (547 aa).

The N-terminal stretch at 1 to 29 is a signal peptide; it reads MATMVPSVLWPRACWTLLVCCLLTPGVQG. The Extracellular portion of the chain corresponds to 30-485; that stretch reads QEFLLRVEPQ…VMDIEAGSSH (456 aa). The region spanning 46–103 is the Ig-like C2-type 1 domain; it reads GGSLFVNCSTDCPSSEKIALETSLSKELVASGMGWAAFNLSNVTGNSRILCSVYCNGS. N-linked (GlcNAc...) asparagine glycosylation is found at N52, N84, N87, N101, N110, and N134. Disulfide bonds link C53-C96 and C57-C100. Positions 132 to 197 constitute an Ig-like C2-type 2 domain; sequence GQNFTLRCQV…FSCRTELDMQ (66 aa). C139 and C190 are disulfide-bonded. N206, N264, N295, N308, N320, N363, N389, N453, and N457 each carry an N-linked (GlcNAc...) asparagine glycan. An Ig-like C2-type 3 domain is found at 234–301; that stretch reads ETSWPVDCTL…IVCNVTLGGE (68 aa). Cysteines 241 and 294 form a disulfide. Residues 329–382 form the Ig-like C2-type 4 domain; the sequence is GSTVTVSCMAGARVQVTLDGVPAAAPGQPAQLQLNATESDDGRSFFCSATLEVD. C336 and C375 are disulfide-bonded. Residues 416 to 469 enclose the Ig-like C2-type 5 domain; the sequence is KTRHVLQCQARGNPYPELRCLKEGSSREVPVGIPFFVNVTHNGTYQCQASSSRG. C423 and C462 are oxidised to a cystine. A helical transmembrane segment spans residues 486–510; that stretch reads FVPVFVAVLLTLGVVTIVLALMYVF. Topologically, residues 511–547 are cytoplasmic; that stretch reads REHQRSGSYHVREESTYLPLTSMQPTEAMGEEPSRAE.

This sequence belongs to the immunoglobulin superfamily. ICAM family. Interacts with moesin/MSN. Upon stimulation by a physiologic stimuli becomes rapidly and transiently phosphorylated on serine residues. In terms of processing, N-glycosylated; glycans consist of a mixture of tri- and tetra-antennary complex-type chains and high-mannose chains. As to expression, leukocytes.

Its subcellular location is the membrane. In terms of biological role, ICAM proteins are ligands for the leukocyte adhesion protein LFA-1 (integrin alpha-L/beta-2). ICAM3 is also a ligand for integrin alpha-D/beta-2. In association with integrin alpha-L/beta-2, contributes to apoptotic neutrophil phagocytosis by macrophages. The chain is Intercellular adhesion molecule 3 (ICAM3) from Homo sapiens (Human).